We begin with the raw amino-acid sequence, 403 residues long: Argininosuccinate synthase (403 aa).

ATP-binding positions include 13–21 (AYSGGLDTS) and alanine 40. L-citrulline is bound by residues tyrosine 92 and serine 97. Glycine 122 lines the ATP pocket. Threonine 124, asparagine 128, and aspartate 129 together coordinate L-aspartate. Asparagine 128 contributes to the L-citrulline binding site. 5 residues coordinate L-citrulline: arginine 132, serine 181, serine 190, glutamate 266, and tyrosine 278.

Belongs to the argininosuccinate synthase family. Type 1 subfamily. In terms of assembly, homotetramer.

The protein resides in the cytoplasm. The enzyme catalyses L-citrulline + L-aspartate + ATP = 2-(N(omega)-L-arginino)succinate + AMP + diphosphate + H(+). It functions in the pathway amino-acid biosynthesis; L-arginine biosynthesis; L-arginine from L-ornithine and carbamoyl phosphate: step 2/3. The polypeptide is Argininosuccinate synthase (Aliivibrio fischeri (strain MJ11) (Vibrio fischeri)).